The sequence spans 739 residues: Cleavage and polyadenylation specificity factor subunit 2 (739 aa).

Residues Val-411–Asp-423 show a composition bias toward basic and acidic residues. Residues Val-411 to Met-430 form a disordered region.

Belongs to the metallo-beta-lactamase superfamily. RNA-metabolizing metallo-beta-lactamase-like family. CPSF2/YSH1 subfamily. In terms of assembly, component of the CPSF complex, at least composed of CPSF160, CPSF100, CPSF73-I, CPSF73-II, CPSF30, FY and FIPS5. Forms a complex with cleavage and polyadenylation specificity factor (CPSF) subunits FY, PAPS2, CSTF50, CPSF30, CPSF73-I, CPSF73-II and CPSF160.

It is found in the nucleus. The protein localises to the cytoplasm. Functionally, CPSF plays a key role in pre-mRNA 3'-end formation, recognizing the AAUAAA signal sequence and interacting with poly(A)polymerase and other factors to bring about cleavage and poly(A) addition. Required for antisense-RNA-mediated gene silencing. This is Cleavage and polyadenylation specificity factor subunit 2 (CPSF100) from Arabidopsis thaliana (Mouse-ear cress).